The chain runs to 204 residues: Probable chorismate pyruvate-lyase (204 aa).

Arg78, Leu131, and Glu190 together coordinate substrate.

The protein belongs to the UbiC family.

It is found in the cytoplasm. It carries out the reaction chorismate = 4-hydroxybenzoate + pyruvate. It functions in the pathway cofactor biosynthesis; ubiquinone biosynthesis. Removes the pyruvyl group from chorismate, with concomitant aromatization of the ring, to provide 4-hydroxybenzoate (4HB) for the ubiquinone pathway. This chain is Probable chorismate pyruvate-lyase, found in Shewanella frigidimarina (strain NCIMB 400).